Consider the following 274-residue polypeptide: Putative HTH-type transcriptional regulator RmpR (274 aa).

Positions 18–88 (IERADAIVER…RSGGTFVVNQ (71 aa)) constitute an HTH gntR-type domain. A DNA-binding region (H-T-H motif) is located at residues 46 to 65 (EAALSEMFGVGGATLREALS). The span at 250–265 (SRPSSPATAPDGSSSA) shows a compositional bias: polar residues. Residues 250-274 (SRPSSPATAPDGSSSAEAAMIQEGQ) are disordered.

Its function is as follows. May regulate the transcription of the rmpAB operon. In Mycobacterium gastri, this protein is Putative HTH-type transcriptional regulator RmpR (rmpR).